Here is a 502-residue protein sequence, read N- to C-terminus: Cytochrome P450 3A40 (502 aa).

Cys443 contributes to the heme binding site.

The protein belongs to the cytochrome P450 family. Heme is required as a cofactor.

The protein resides in the endoplasmic reticulum membrane. The protein localises to the microsome membrane. The enzyme catalyses an organic molecule + reduced [NADPH--hemoprotein reductase] + O2 = an alcohol + oxidized [NADPH--hemoprotein reductase] + H2O + H(+). The sequence is that of Cytochrome P450 3A40 (cyp3a40) from Oryzias latipes (Japanese rice fish).